A 363-amino-acid polypeptide reads, in one-letter code: Cysteine proteinase 15A (363 aa).

The first 18 residues, 1-18 (MDRRFLFALFLFAAVATA), serve as a signal peptide directing secretion. Residues 19 to 131 (VTDDTNNDDF…QKAPILPTTN (113 aa)) constitute a propeptide, activation peptide. Cystine bridges form between cysteine 153/cysteine 203 and cysteine 187/cysteine 236. Cysteine 156 is a catalytic residue. An N-linked (GlcNAc...) asparagine glycan is attached at asparagine 249. The cysteines at positions 292 and 347 are disulfide-linked. Residues histidine 299 and asparagine 326 contribute to the active site.

Belongs to the peptidase C1 family.

This is Cysteine proteinase 15A from Pisum sativum (Garden pea).